Reading from the N-terminus, the 205-residue chain is Protein GrpE (205 aa).

The tract at residues 172–205 (KGSTGPGAPAEPAAAPNPYASNGADTGGSFDTKA) is disordered. Positions 177 to 195 (PGAPAEPAAAPNPYASNGA) are enriched in low complexity.

It belongs to the GrpE family. As to quaternary structure, homodimer.

The protein resides in the cytoplasm. Functionally, participates actively in the response to hyperosmotic and heat shock by preventing the aggregation of stress-denatured proteins, in association with DnaK and GrpE. It is the nucleotide exchange factor for DnaK and may function as a thermosensor. Unfolded proteins bind initially to DnaJ; upon interaction with the DnaJ-bound protein, DnaK hydrolyzes its bound ATP, resulting in the formation of a stable complex. GrpE releases ADP from DnaK; ATP binding to DnaK triggers the release of the substrate protein, thus completing the reaction cycle. Several rounds of ATP-dependent interactions between DnaJ, DnaK and GrpE are required for fully efficient folding. This Caulobacter sp. (strain K31) protein is Protein GrpE.